The chain runs to 178 residues: Large ribosomal subunit protein uL6 (178 aa).

It belongs to the universal ribosomal protein uL6 family. Part of the 50S ribosomal subunit.

In terms of biological role, this protein binds to the 23S rRNA, and is important in its secondary structure. It is located near the subunit interface in the base of the L7/L12 stalk, and near the tRNA binding site of the peptidyltransferase center. The protein is Large ribosomal subunit protein uL6 of Shouchella clausii (strain KSM-K16) (Alkalihalobacillus clausii).